Reading from the N-terminus, the 473-residue chain is Protein translocase subunit SecA (473 aa).

Asp127 serves as a coordination point for ATP. Positions 424–447 are disordered; it reads VAEGKAVHQDTSKQEPKKKQPIRK. Zn(2+) contacts are provided by Cys457, Cys459, Cys468, and Cys469.

The protein belongs to the SecA family. Monomer and homodimer. Part of the essential Sec protein translocation apparatus which comprises SecA, SecYEG and auxiliary proteins SecDF. Other proteins may also be involved. It depends on Zn(2+) as a cofactor.

Its subcellular location is the cell membrane. It localises to the cytoplasm. It catalyses the reaction ATP + H2O + cellular proteinSide 1 = ADP + phosphate + cellular proteinSide 2.. Functionally, part of the Sec protein translocase complex. Interacts with the SecYEG preprotein conducting channel. Has a central role in coupling the hydrolysis of ATP to the transfer of proteins into and across the cell membrane, serving as an ATP-driven molecular motor driving the stepwise translocation of polypeptide chains across the membrane. This Cytobacillus firmus (Bacillus firmus) protein is Protein translocase subunit SecA.